The sequence spans 397 residues: MTLPTDPAANLAALIRCASVTPAEGGALGALETMLKPLGFLVDRPVFSEDGTPDIENLYARRSGNGPHLMFAGHTDVVPVGDEAAWTHPPFAAEIANGEMYGRGAVDMKGGIACFVAAIARHVENNGGPKGSVSLLITGDEEGPAINGTVKLLEWAASRGEKWDASIVGEPTNPDTLGDMIKIGRRGSLSGSITVNGRQGHAAYPQLADNPVRGLMGLVDALLHPVFDKGTKDFQPTNLEVTSIDVGNPATNVIPAKATATFNIRFNDTWTAETVQAEIHNRLDQAAKRKKYRPGKKTPVDYDLVWRDRPSHVFLTRDDKLVDTLAGSIKAAVGKEPTLSTSGGTSDARFIKDYCPVVEFGLVGKTMHMVDERVALADLETLTRIYQRFIEDWFGQG.

Residue H74 coordinates Zn(2+). The active site involves D76. D107 contacts Zn(2+). E141 functions as the Proton acceptor in the catalytic mechanism. The Zn(2+) site is built by E142, E170, and H368.

The protein belongs to the peptidase M20A family. DapE subfamily. Homodimer. Zn(2+) is required as a cofactor. Requires Co(2+) as cofactor.

It carries out the reaction N-succinyl-(2S,6S)-2,6-diaminopimelate + H2O = (2S,6S)-2,6-diaminopimelate + succinate. It participates in amino-acid biosynthesis; L-lysine biosynthesis via DAP pathway; LL-2,6-diaminopimelate from (S)-tetrahydrodipicolinate (succinylase route): step 3/3. Its function is as follows. Catalyzes the hydrolysis of N-succinyl-L,L-diaminopimelic acid (SDAP), forming succinate and LL-2,6-diaminopimelate (DAP), an intermediate involved in the bacterial biosynthesis of lysine and meso-diaminopimelic acid, an essential component of bacterial cell walls. This chain is Succinyl-diaminopimelate desuccinylase, found in Mesorhizobium japonicum (strain LMG 29417 / CECT 9101 / MAFF 303099) (Mesorhizobium loti (strain MAFF 303099)).